We begin with the raw amino-acid sequence, 599 residues long: Aspartate--tRNA(Asp/Asn) ligase (599 aa).

Residue glutamate 174 participates in L-aspartate binding. Positions 198-201 (QLFK) are aspartate. Arginine 220 contributes to the L-aspartate binding site. ATP is bound by residues 220-222 (RDE) and glutamine 229. Residue histidine 457 coordinates L-aspartate. Glutamate 491 serves as a coordination point for ATP. An L-aspartate-binding site is contributed by arginine 498. ATP is bound at residue 543-546 (GLDR).

The protein belongs to the class-II aminoacyl-tRNA synthetase family. Type 1 subfamily. As to quaternary structure, homodimer.

It is found in the cytoplasm. It catalyses the reaction tRNA(Asx) + L-aspartate + ATP = L-aspartyl-tRNA(Asx) + AMP + diphosphate. Aspartyl-tRNA synthetase with relaxed tRNA specificity since it is able to aspartylate not only its cognate tRNA(Asp) but also tRNA(Asn). Reaction proceeds in two steps: L-aspartate is first activated by ATP to form Asp-AMP and then transferred to the acceptor end of tRNA(Asp/Asn). In Paraburkholderia phytofirmans (strain DSM 17436 / LMG 22146 / PsJN) (Burkholderia phytofirmans), this protein is Aspartate--tRNA(Asp/Asn) ligase.